Reading from the N-terminus, the 446-residue chain is Kynurenine 3-monooxygenase (446 aa).

It belongs to the aromatic-ring hydroxylase family. KMO subfamily. The cofactor is FAD.

The enzyme catalyses L-kynurenine + NADPH + O2 + H(+) = 3-hydroxy-L-kynurenine + NADP(+) + H2O. It participates in cofactor biosynthesis; NAD(+) biosynthesis; quinolinate from L-kynurenine: step 1/3. Its function is as follows. Catalyzes the hydroxylation of L-kynurenine (L-Kyn) to form 3-hydroxy-L-kynurenine (L-3OHKyn). Required for synthesis of quinolinic acid. This is Kynurenine 3-monooxygenase from Flavobacterium johnsoniae (strain ATCC 17061 / DSM 2064 / JCM 8514 / BCRC 14874 / CCUG 350202 / NBRC 14942 / NCIMB 11054 / UW101) (Cytophaga johnsonae).